We begin with the raw amino-acid sequence, 123 residues long: Large ribosomal subunit protein uL18 (123 aa).

Belongs to the universal ribosomal protein uL18 family. Part of the 50S ribosomal subunit; part of the 5S rRNA/L5/L18/L25 subcomplex. Contacts the 5S and 23S rRNAs.

Functionally, this is one of the proteins that bind and probably mediate the attachment of the 5S RNA into the large ribosomal subunit, where it forms part of the central protuberance. The chain is Large ribosomal subunit protein uL18 from Chlamydia abortus (strain DSM 27085 / S26/3) (Chlamydophila abortus).